A 1886-amino-acid chain; its full sequence is Highly reducing polyketide synthase (1886 aa).

The 424-residue stretch at 11–434 folds into the Ketosynthase family 3 (KS3) domain; the sequence is TQDVAIVGLS…GANAHAVLDD (424 aa). Catalysis depends on for beta-ketoacyl synthase activity residues cysteine 182, histidine 317, and histidine 357. Residues 483-568 form a malonyl-CoA:ACP transacylase (MAT) domain region; the sequence is FLFSGQDQQS…VNNDLANTKK (86 aa). The tract at residues 616–750 is N-terminal hotdog fold; it reads RSLIGAPQPS…GLLSIEYESS (135 aa). The region spanning 616-926 is the PKS/mFAS DH domain; it reads RSLIGAPQPS…CTAISEATNP (311 aa). The segment at 618–924 is dehydratase (DH) domain; that stretch reads LIGAPQPSYG…LHCTAISEAT (307 aa). The active-site Proton acceptor; for dehydratase activity is histidine 648. The C-terminal hotdog fold stretch occupies residues 778-926; the sequence is HTTQSPKALY…CTAISEATNP (149 aa). Aspartate 838 serves as the catalytic Proton donor; for dehydratase activity. The enoylreductase (ER) domain stretch occupies residues 1169–1480; the sequence is GMLDEIYFEA…AGKHMGKVAL (312 aa). A catalytic ketoreductase (KRc) domain region spans residues 1503-1681; the sequence is ATYVLVGGFG…VSLDLGLMRD (179 aa). One can recognise a Carrier domain in the interval 1802–1879; sequence DVTDLVLEIL…DLVDKIVAKS (78 aa). O-(pantetheine 4'-phosphoryl)serine is present on serine 1839.

Its pathway is mycotoxin biosynthesis. Functionally, highly reducing polyketide synthase; part of the gene cluster that mediates the biosynthesis of the selective antifungal agent ascochitine, an o-quinone methide that plays a possible protective role against other microbial competitors in nature and is considered to be important for pathogenicity of legume-associated Didymella species. The pathway probably begins with the synthesis of a keto-aldehyde intermediate by the ascochitine non-reducing polyketide synthase pksAC from successive condensations of 4 malonyl-CoA units, presumably with a simple acetyl-CoA starter unit. Release of the keto-aldehyde intermediate is consistent with the presence of the C-terminal reductive release domain. The HR-PKS (orf7) probably makes a diketide starter unit which is passed to the non-reducing polyketide synthase pksAC for further extension, producing ascochital and ascochitine. The aldehyde dehydrogenase (orf1), the 2-oxoglutarate-dependent dioxygenase (orf3) and the dehydrogenase (orf9) are probably involved in subsequent oxidations of methyl groups to the carboxylic acid of the heterocyclic ring. The ascochitine gene cluster also includes a gene encoding a short peptide with a cupin domain (orf2) that is often found in secondary metabolite gene clusters and which function has still to be determined. The sequence is that of Highly reducing polyketide synthase from Didymella fabae (Leaf and pod spot disease fungus).